We begin with the raw amino-acid sequence, 372 residues long: Enolase (372 aa).

His95 and Glu104 together coordinate substrate. Glu147 (proton donor) is an active-site residue. Mg(2+)-binding residues include Asp182, Glu232, and Asp257. 2 residues coordinate substrate: Glu232 and Asp257. Lys282 acts as the Proton acceptor in catalysis. Residues 309–312 and Lys333 contribute to the substrate site; that span reads SHRS.

This sequence belongs to the enolase family. As to quaternary structure, homodimer. Mg(2+) is required as a cofactor.

The protein resides in the cytoplasm. The enzyme catalyses (2R)-2-phosphoglycerate = phosphoenolpyruvate + H2O. The protein operates within carbohydrate degradation; glycolysis; pyruvate from D-glyceraldehyde 3-phosphate: step 4/5. This chain is Enolase (ENO), found in Chlamydomonas reinhardtii (Chlamydomonas smithii).